An 869-amino-acid chain; its full sequence is Phenylalanine--tRNA ligase beta subunit (869 aa).

The tRNA-binding domain maps to 41–162; that stretch reads SQVTGPIVVG…QYGFSEAEYE (122 aa). Residues 443–519 form the B5 domain; the sequence is PRAKAIHFKA…RLVGYDQIPI (77 aa). The Mg(2+) site is built by Asp-497, Asp-503, Glu-506, and Glu-507. Residues 776–868 enclose the FDX-ACB domain; the sequence is STFPPVKQDL…EAAEIGAQLR (93 aa).

Belongs to the phenylalanyl-tRNA synthetase beta subunit family. Type 1 subfamily. Tetramer of two alpha and two beta subunits. Requires Mg(2+) as cofactor.

The protein localises to the cytoplasm. It carries out the reaction tRNA(Phe) + L-phenylalanine + ATP = L-phenylalanyl-tRNA(Phe) + AMP + diphosphate + H(+). In Bifidobacterium longum (strain NCC 2705), this protein is Phenylalanine--tRNA ligase beta subunit.